Here is an 845-residue protein sequence, read N- to C-terminus: Lon protease (845 aa).

One can recognise a Lon N-terminal domain in the interval 45 to 242 (MPILALRNMI…RLLYLLHKEL (198 aa)). Position 393–400 (393–400 (GPPGVGKT)) interacts with ATP. The 183-residue stretch at 629–811 (NGDAGVVIGL…NEVLKEALLE (183 aa)) folds into the Lon proteolytic domain. Active-site residues include Ser717 and Lys760.

The protein belongs to the peptidase S16 family. As to quaternary structure, homohexamer. Organized in a ring with a central cavity.

It is found in the cytoplasm. It catalyses the reaction Hydrolysis of proteins in presence of ATP.. In terms of biological role, ATP-dependent serine protease that mediates the selective degradation of mutant and abnormal proteins as well as certain short-lived regulatory proteins. Required for cellular homeostasis and for survival from DNA damage and developmental changes induced by stress. Degrades polypeptides processively to yield small peptide fragments that are 5 to 10 amino acids long. Binds to DNA in a double-stranded, site-specific manner. The protein is Lon protease of Porphyromonas gingivalis (strain ATCC 33277 / DSM 20709 / CIP 103683 / JCM 12257 / NCTC 11834 / 2561).